The following is a 395-amino-acid chain: tRNA-specific 2-thiouridylase MnmA (395 aa).

Residues 6–13 and leucine 32 each bind ATP; that span reads AMSGGVDS. Cysteine 101 acts as the Nucleophile in catalysis. A disulfide bridge links cysteine 101 with cysteine 193. Glycine 125 is an ATP binding site. The interval 143 to 145 is interaction with tRNA; sequence KDQ. The active-site Cysteine persulfide intermediate is cysteine 193.

Belongs to the MnmA/TRMU family.

It localises to the cytoplasm. It carries out the reaction S-sulfanyl-L-cysteinyl-[protein] + uridine(34) in tRNA + AH2 + ATP = 2-thiouridine(34) in tRNA + L-cysteinyl-[protein] + A + AMP + diphosphate + H(+). In terms of biological role, catalyzes the 2-thiolation of uridine at the wobble position (U34) of tRNA, leading to the formation of s(2)U34. The sequence is that of tRNA-specific 2-thiouridylase MnmA from Corynebacterium jeikeium (strain K411).